A 416-amino-acid polypeptide reads, in one-letter code: 4-hydroxy-3-methylbut-2-en-1-yl diphosphate synthase (flavodoxin) (416 aa).

Residues cysteine 304, cysteine 307, cysteine 350, and glutamate 357 each contribute to the [4Fe-4S] cluster site.

Belongs to the IspG family. [4Fe-4S] cluster serves as cofactor.

It catalyses the reaction (2E)-4-hydroxy-3-methylbut-2-enyl diphosphate + oxidized [flavodoxin] + H2O + 2 H(+) = 2-C-methyl-D-erythritol 2,4-cyclic diphosphate + reduced [flavodoxin]. It functions in the pathway isoprenoid biosynthesis; isopentenyl diphosphate biosynthesis via DXP pathway; isopentenyl diphosphate from 1-deoxy-D-xylulose 5-phosphate: step 5/6. Its function is as follows. Converts 2C-methyl-D-erythritol 2,4-cyclodiphosphate (ME-2,4cPP) into 1-hydroxy-2-methyl-2-(E)-butenyl 4-diphosphate. This is 4-hydroxy-3-methylbut-2-en-1-yl diphosphate synthase (flavodoxin) from Rhizobium etli (strain ATCC 51251 / DSM 11541 / JCM 21823 / NBRC 15573 / CFN 42).